Reading from the N-terminus, the 169-residue chain is Putative prolyl-tRNA synthetase associated domain-containing protein 1 (169 aa).

Belongs to the PRORSD1 family.

In Homo sapiens (Human), this protein is Putative prolyl-tRNA synthetase associated domain-containing protein 1 (PRORSD1P).